The chain runs to 127 residues: Secreted RxLR effector protein 3 (127 aa).

A signal peptide spans 1–20; that stretch reads MRPPLLLFLTVTVLVSCASA. Positions 30 to 48 match the RxLR-dEER motif; sequence RSLRSIKTTTNDDAAEEER.

It belongs to the RxLR effector family.

The protein resides in the secreted. It localises to the host cell. Functionally, secreted effector that partially suppresses elicitor-induced cell death in host and enhances virulence of P.parasitica. The sequence is that of Secreted RxLR effector protein 3 from Phytophthora nicotianae (Potato buckeye rot agent).